A 278-amino-acid chain; its full sequence is MGLKASLSLLSLTILLVFSKVVTANNITLAFQKYSKFSTMRDLFIKTKLIAAIDKYQTITVLAVSNDAISSITNRSEVELRNILMTHVILDYYDELKLQGMREKSIMLTTLYQTTGLGEQMNGFLNVSKSKGRVYFGSEVKNSPLNAEYVSTVYHNPYNLSIIQITMPIVAPGLSLAIFPPPPPYVHVAPYPTPMDASVVPAPGPAADDNSPDSAVPKTPPAPATDTPEADSPAPAPSADNEKIEAADKAKPSSSASKAGWSFDVILLLAFLASFAGF.

The signal sequence occupies residues 1–24; sequence MGLKASLSLLSLTILLVFSKVVTA. One can recognise an FAS1 domain in the interval 25-169; it reads NNITLAFQKY…LSIIQITMPI (145 aa). 4 N-linked (GlcNAc...) asparagine glycosylation sites follow: asparagine 26, asparagine 74, asparagine 126, and asparagine 159. The disordered stretch occupies residues 199–257; that stretch reads VVPAPGPAADDNSPDSAVPKTPPAPATDTPEADSPAPAPSADNEKIEAADKAKPSSSAS. The span at 224 to 239 shows a compositional bias: low complexity; that stretch reads ATDTPEADSPAPAPSA. Basic and acidic residues predominate over residues 240 to 251; the sequence is DNEKIEAADKAK. Serine 255 carries GPI-anchor amidated serine lipidation. The propeptide at 256–278 is removed in mature form; the sequence is ASKAGWSFDVILLLAFLASFAGF.

This sequence belongs to the fasciclin-like AGP family.

Its subcellular location is the cell membrane. Its function is as follows. May be a cell surface adhesion protein. The chain is Fasciclin-like arabinogalactan protein 5 (FLA5) from Arabidopsis thaliana (Mouse-ear cress).